Here is a 284-residue protein sequence, read N- to C-terminus: Nucleotide-binding protein Pput_0988 (284 aa).

8–15 (GRSGSGKS) provides a ligand contact to ATP. 60–63 (DARN) lines the GTP pocket.

This sequence belongs to the RapZ-like family.

Functionally, displays ATPase and GTPase activities. The sequence is that of Nucleotide-binding protein Pput_0988 from Pseudomonas putida (strain ATCC 700007 / DSM 6899 / JCM 31910 / BCRC 17059 / LMG 24140 / F1).